The primary structure comprises 417 residues: UDP-N-acetylglucosamine 1-carboxyvinyltransferase (417 aa).

Residue 22–23 coordinates phosphoenolpyruvate; sequence KN. Arginine 92 contributes to the UDP-N-acetyl-alpha-D-glucosamine binding site. The Proton donor role is filled by cysteine 116. The residue at position 116 (cysteine 116) is a 2-(S-cysteinyl)pyruvic acid O-phosphothioketal. The UDP-N-acetyl-alpha-D-glucosamine site is built by aspartate 304 and isoleucine 326.

The protein belongs to the EPSP synthase family. MurA subfamily.

The protein localises to the cytoplasm. It catalyses the reaction phosphoenolpyruvate + UDP-N-acetyl-alpha-D-glucosamine = UDP-N-acetyl-3-O-(1-carboxyvinyl)-alpha-D-glucosamine + phosphate. It participates in cell wall biogenesis; peptidoglycan biosynthesis. Its function is as follows. Cell wall formation. Adds enolpyruvyl to UDP-N-acetylglucosamine. In Desulfosudis oleivorans (strain DSM 6200 / JCM 39069 / Hxd3) (Desulfococcus oleovorans), this protein is UDP-N-acetylglucosamine 1-carboxyvinyltransferase.